We begin with the raw amino-acid sequence, 168 residues long: RNA pyrophosphohydrolase (168 aa).

The Nudix hydrolase domain occupies 8–160; that stretch reads PYRTCVGIAL…KRPVYERVAK (153 aa). Residues 47 to 68 carry the Nudix box motif; it reads GGVDPGEDAWEAAKRELYEETS.

The protein belongs to the Nudix hydrolase family. RppH subfamily. The cofactor is a divalent metal cation.

Functionally, accelerates the degradation of transcripts by removing pyrophosphate from the 5'-end of triphosphorylated RNA, leading to a more labile monophosphorylated state that can stimulate subsequent ribonuclease cleavage. The chain is RNA pyrophosphohydrolase from Bradyrhizobium sp. (strain ORS 278).